We begin with the raw amino-acid sequence, 158 residues long: Small ribosomal subunit protein uS9 (158 aa).

Residues 1-10 (MSDTMQSLDQ) show a composition bias toward polar residues. The disordered stretch occupies residues 1–35 (MSDTMQSLDQLSALKTAAPDAPKREKKVDKQGRAY). Positions 21 to 32 (APKREKKVDKQG) are enriched in basic and acidic residues.

The protein belongs to the universal ribosomal protein uS9 family.

In Afipia carboxidovorans (strain ATCC 49405 / DSM 1227 / KCTC 32145 / OM5) (Oligotropha carboxidovorans), this protein is Small ribosomal subunit protein uS9.